The sequence spans 342 residues: GTP 3',8-cyclase (342 aa).

A Radical SAM core domain is found at 18 to 247 (GFSRRFYYLR…QLRGADDGPA (230 aa)). Arg-27 provides a ligand contact to GTP. [4Fe-4S] cluster-binding residues include Cys-34 and Cys-38. Tyr-40 is an S-adenosyl-L-methionine binding site. A [4Fe-4S] cluster-binding site is contributed by Cys-41. Arg-81 lines the GTP pocket. Gly-85 serves as a coordination point for S-adenosyl-L-methionine. Thr-112 contributes to the GTP binding site. Ser-136 lines the S-adenosyl-L-methionine pocket. Lys-173 is a binding site for GTP. Residue Met-207 coordinates S-adenosyl-L-methionine. Cys-270 and Cys-273 together coordinate [4Fe-4S] cluster. 275-277 (RLR) contacts GTP. Cys-287 provides a ligand contact to [4Fe-4S] cluster.

The protein belongs to the radical SAM superfamily. MoaA family. As to quaternary structure, monomer and homodimer. Requires [4Fe-4S] cluster as cofactor.

It carries out the reaction GTP + AH2 + S-adenosyl-L-methionine = (8S)-3',8-cyclo-7,8-dihydroguanosine 5'-triphosphate + 5'-deoxyadenosine + L-methionine + A + H(+). It functions in the pathway cofactor biosynthesis; molybdopterin biosynthesis. In terms of biological role, catalyzes the cyclization of GTP to (8S)-3',8-cyclo-7,8-dihydroguanosine 5'-triphosphate. In Aeromonas hydrophila subsp. hydrophila (strain ATCC 7966 / DSM 30187 / BCRC 13018 / CCUG 14551 / JCM 1027 / KCTC 2358 / NCIMB 9240 / NCTC 8049), this protein is GTP 3',8-cyclase.